A 232-amino-acid chain; its full sequence is Ubiquinone biosynthesis O-methyltransferase (232 aa).

The S-adenosyl-L-methionine site is built by Arg36, Gly55, Asp76, and Leu120.

The protein belongs to the methyltransferase superfamily. UbiG/COQ3 family.

The catalysed reaction is a 3-demethylubiquinol + S-adenosyl-L-methionine = a ubiquinol + S-adenosyl-L-homocysteine + H(+). It carries out the reaction a 3-(all-trans-polyprenyl)benzene-1,2-diol + S-adenosyl-L-methionine = a 2-methoxy-6-(all-trans-polyprenyl)phenol + S-adenosyl-L-homocysteine + H(+). It participates in cofactor biosynthesis; ubiquinone biosynthesis. O-methyltransferase that catalyzes the 2 O-methylation steps in the ubiquinone biosynthetic pathway. The protein is Ubiquinone biosynthesis O-methyltransferase of Pseudomonas aeruginosa (strain UCBPP-PA14).